Here is a 164-residue protein sequence, read N- to C-terminus: Ribosome-binding factor A (164 aa).

The disordered stretch occupies residues 123–164 (ARDLGVPPSGEDDGDDEADDEDDDGGEEGPGAAAPPPADEGR). Acidic residues predominate over residues 132–149 (GEDDGDDEADDEDDDGGE). A compositionally biased stretch (pro residues) spans 155–164 (AAPPPADEGR).

This sequence belongs to the RbfA family. As to quaternary structure, monomer. Binds 30S ribosomal subunits, but not 50S ribosomal subunits or 70S ribosomes.

It localises to the cytoplasm. In terms of biological role, one of several proteins that assist in the late maturation steps of the functional core of the 30S ribosomal subunit. Associates with free 30S ribosomal subunits (but not with 30S subunits that are part of 70S ribosomes or polysomes). Required for efficient processing of 16S rRNA. May interact with the 5'-terminal helix region of 16S rRNA. This Rhodospirillum rubrum (strain ATCC 11170 / ATH 1.1.1 / DSM 467 / LMG 4362 / NCIMB 8255 / S1) protein is Ribosome-binding factor A.